The primary structure comprises 595 residues: Probable hydrolase M10 (595 aa).

The N-terminal stretch at 1–23 (MRFTSTILLRVAVLLSLGGGSQT) is a signal peptide. N-linked (GlcNAc...) asparagine glycosylation is found at Asn59, Asn87, Asn266, Asn436, Asn457, and Asn561.

This sequence belongs to the beta-lactamase family.

It functions in the pathway secondary metabolite biosynthesis. Probable hydrolase; part of the gene cluster that mediates the biosynthesis of squalestatin S1 (SQS1, also known as zaragozic acid A), a heavily oxidized fungal polyketide that offers potent cholesterol lowering activity by targeting squalene synthase (SS). SQS1 is composed of a 2,8-dioxobicyclic[3.2.1]octane-3,4,5-tricarboxyclic acid core that is connected to two lipophilic polyketide arms. These initial steps feature the priming of an unusual benzoic acid starter unit onto the highly reducing polyketide synthase pks2, followed by oxaloacetate extension and product release to generate a tricarboxylic acid containing product. The phenylalanine ammonia lyase (PAL) M7 and the acyl-CoA ligase M9 are involved in transforming phenylalanine into benzoyl-CoA. The citrate synthase-like protein R3 is involved in connecting the C-alpha-carbons of the hexaketide chain and oxaloacetate to afford the tricarboxylic acid unit. The potential hydrolytic enzymes, M8 and M10, are in close proximity to pks2 and may participate in product release. On the other side, the tetraketide arm is synthesized by a the squalestatin tetraketide synthase pks1 and enzymatically esterified to the core in the last biosynthetic step, by the acetyltransferase M4. The biosynthesis of the tetraketide must involve 3 rounds of chain extension. After the first and second rounds methyl-transfer occurs, and in all rounds of extension the ketoreductase and dehydratase are active. The enoyl reductase and C-MeT of pks1 are not active in the final round of extension. The acetyltransferase M4 appears to have a broad substrate selectivity for its acyl CoA substrate, allowing the in vitro synthesis of novel squalestatins. The biosynthesis of SQS1 requires several oxidative steps likely performed by oxidoreductases M1, R1 and R2. Finally, in support of the identification of the cluster as being responsible for SQS1 production, the cluster contains a gene encoding a putative squalene synthase (SS) R6, suggesting a likely mechanism for self-resistance. This Phoma sp. (strain ATCC 20986 / MF5453) protein is Probable hydrolase M10.